The sequence spans 474 residues: Siroheme synthase (474 aa).

Residues 1–202 (MEYLPIFIDL…GRPKEANKVL (202 aa)) form a precorrin-2 dehydrogenase /sirohydrochlorin ferrochelatase region. Residues 22–23 (AV) and 41–42 (PA) contribute to the NAD(+) site. A Phosphoserine modification is found at serine 126. A uroporphyrinogen-III C-methyltransferase region spans residues 218–474 (GHVTLVGAGP…YLINSIINLI (257 aa)). Proline 227 contributes to the S-adenosyl-L-methionine binding site. Aspartate 250 acts as the Proton acceptor in catalysis. Lysine 272 serves as the catalytic Proton donor. Residues 303 to 305 (GGD), isoleucine 308, 333 to 334 (TA), methionine 385, and glycine 414 contribute to the S-adenosyl-L-methionine site.

The protein in the N-terminal section; belongs to the precorrin-2 dehydrogenase / sirohydrochlorin ferrochelatase family. This sequence in the C-terminal section; belongs to the precorrin methyltransferase family.

It carries out the reaction uroporphyrinogen III + 2 S-adenosyl-L-methionine = precorrin-2 + 2 S-adenosyl-L-homocysteine + H(+). The catalysed reaction is precorrin-2 + NAD(+) = sirohydrochlorin + NADH + 2 H(+). The enzyme catalyses siroheme + 2 H(+) = sirohydrochlorin + Fe(2+). It participates in cofactor biosynthesis; adenosylcobalamin biosynthesis; precorrin-2 from uroporphyrinogen III: step 1/1. It functions in the pathway cofactor biosynthesis; adenosylcobalamin biosynthesis; sirohydrochlorin from precorrin-2: step 1/1. The protein operates within porphyrin-containing compound metabolism; siroheme biosynthesis; precorrin-2 from uroporphyrinogen III: step 1/1. Its pathway is porphyrin-containing compound metabolism; siroheme biosynthesis; siroheme from sirohydrochlorin: step 1/1. It participates in porphyrin-containing compound metabolism; siroheme biosynthesis; sirohydrochlorin from precorrin-2: step 1/1. Its function is as follows. Multifunctional enzyme that catalyzes the SAM-dependent methylations of uroporphyrinogen III at position C-2 and C-7 to form precorrin-2 via precorrin-1. Then it catalyzes the NAD-dependent ring dehydrogenation of precorrin-2 to yield sirohydrochlorin. Finally, it catalyzes the ferrochelation of sirohydrochlorin to yield siroheme. This is Siroheme synthase from Blochmanniella pennsylvanica (strain BPEN).